The primary structure comprises 157 residues: Probable Brix domain-containing ribosomal biogenesis protein (157 aa).

Positions Met-1 to Tyr-157 constitute a Brix domain.

Probably involved in the biogenesis of the ribosome. The protein is Probable Brix domain-containing ribosomal biogenesis protein of Methanosarcina mazei (strain ATCC BAA-159 / DSM 3647 / Goe1 / Go1 / JCM 11833 / OCM 88) (Methanosarcina frisia).